The following is a 1002-amino-acid chain: Lon protease homolog, mitochondrial (1002 aa).

Residues Val-102–Met-313 enclose the Lon N-terminal domain. Gly-468–Thr-475 is a binding site for ATP. Residues Gln-811 to Ser-995 enclose the Lon proteolytic domain. Catalysis depends on residues Ser-901 and Lys-944.

The protein belongs to the peptidase S16 family. In terms of assembly, homohexamer or homoheptamer. Organized in a ring with a central cavity.

Its subcellular location is the mitochondrion matrix. It catalyses the reaction Hydrolysis of proteins in presence of ATP.. ATP-dependent serine protease that mediates the selective degradation of misfolded, unassembled or oxidatively damaged polypeptides as well as certain short-lived regulatory proteins in the mitochondrial matrix. May also have a chaperone function in the assembly of inner membrane protein complexes. Participates in the regulation of mitochondrial gene expression and in the maintenance of the integrity of the mitochondrial genome. Binds to mitochondrial DNA in a site-specific manner. The polypeptide is Lon protease homolog, mitochondrial (Oryza sativa subsp. japonica (Rice)).